Here is a 383-residue protein sequence, read N- to C-terminus: Omega-6 fatty acid desaturase, endoplasmic reticulum isozyme 2 (383 aa).

3 helical membrane passes run 61–81 (TIAF…PGPL), 85–105 (GMAI…VIAH), and 117–137 (LLDD…YFSW). The short motif at 105–109 (HECGH) is the Histidine box-1 element. The Histidine box-2 motif lies at 141–145 (HRRHH). 3 helical membrane passes run 179-199 (VLTL…LNVS), 225-245 (IYIS…LAMA), and 249-269 (AWVV…LVLI). The short motif at 315-319 (HVAHH) is the Histidine box-3 element.

This sequence belongs to the fatty acid desaturase type 1 family.

The protein resides in the endoplasmic reticulum membrane. It participates in lipid metabolism; polyunsaturated fatty acid biosynthesis. ER (microsomal) omega-6 fatty acid desaturase introduces the second double bond in the biosynthesis of 18:3 fatty acids, important constituents of plant membranes. It is thought to use cytochrome b5 as an electron donor and to act on fatty acids esterified to phosphatidylcholine and, possibly, other phospholipids. The polypeptide is Omega-6 fatty acid desaturase, endoplasmic reticulum isozyme 2 (FAD2-2) (Glycine max (Soybean)).